Here is a 91-residue protein sequence, read N- to C-terminus: Small ribosomal subunit protein bS18 (91 aa).

Belongs to the bacterial ribosomal protein bS18 family. In terms of assembly, part of the 30S ribosomal subunit. Forms a tight heterodimer with protein bS6.

Functionally, binds as a heterodimer with protein bS6 to the central domain of the 16S rRNA, where it helps stabilize the platform of the 30S subunit. In Gluconacetobacter diazotrophicus (strain ATCC 49037 / DSM 5601 / CCUG 37298 / CIP 103539 / LMG 7603 / PAl5), this protein is Small ribosomal subunit protein bS18.